Consider the following 92-residue polypeptide: Small ribosomal subunit protein uS19 (92 aa).

Belongs to the universal ribosomal protein uS19 family.

Protein S19 forms a complex with S13 that binds strongly to the 16S ribosomal RNA. The protein is Small ribosomal subunit protein uS19 of Bacillus mycoides (strain KBAB4) (Bacillus weihenstephanensis).